Consider the following 438-residue polypeptide: Phosphoribosylamine--glycine ligase (438 aa).

Residues 108 to 316 (REFMERNDIP…LVEIAEGIVK (209 aa)) enclose the ATP-grasp domain. 135–194 (IDEYGKPVVVKPLGLTGGKGVKVVGYQLKDNEEAKEYAEYLIKKDGKVLIEERTDGVEFT) contributes to the ATP binding site. 3 residues coordinate Mg(2+): Gln274, Glu286, and Asn288. Gln274, Glu286, and Asn288 together coordinate Mn(2+).

The protein belongs to the GARS family. The cofactor is Mg(2+). Mn(2+) serves as cofactor.

The enzyme catalyses 5-phospho-beta-D-ribosylamine + glycine + ATP = N(1)-(5-phospho-beta-D-ribosyl)glycinamide + ADP + phosphate + H(+). The protein operates within purine metabolism; IMP biosynthesis via de novo pathway; N(1)-(5-phospho-D-ribosyl)glycinamide from 5-phospho-alpha-D-ribose 1-diphosphate: step 2/2. This Pyrococcus abyssi (strain GE5 / Orsay) protein is Phosphoribosylamine--glycine ligase.